We begin with the raw amino-acid sequence, 463 residues long: Bifunctional protein HldE (463 aa).

The tract at residues 1 to 313 (MTGPMAVRTD…RALAALPDTD (313 aa)) is ribokinase. D258 is a catalytic residue. The segment at 331–463 (AAGGCFDLLH…LLARAAEGAR (133 aa)) is cytidylyltransferase.

In the N-terminal section; belongs to the carbohydrate kinase PfkB family. It in the C-terminal section; belongs to the cytidylyltransferase family. Homodimer.

It carries out the reaction D-glycero-beta-D-manno-heptose 7-phosphate + ATP = D-glycero-beta-D-manno-heptose 1,7-bisphosphate + ADP + H(+). It catalyses the reaction D-glycero-beta-D-manno-heptose 1-phosphate + ATP + H(+) = ADP-D-glycero-beta-D-manno-heptose + diphosphate. Its pathway is nucleotide-sugar biosynthesis; ADP-L-glycero-beta-D-manno-heptose biosynthesis; ADP-L-glycero-beta-D-manno-heptose from D-glycero-beta-D-manno-heptose 7-phosphate: step 1/4. It participates in nucleotide-sugar biosynthesis; ADP-L-glycero-beta-D-manno-heptose biosynthesis; ADP-L-glycero-beta-D-manno-heptose from D-glycero-beta-D-manno-heptose 7-phosphate: step 3/4. Catalyzes the phosphorylation of D-glycero-D-manno-heptose 7-phosphate at the C-1 position to selectively form D-glycero-beta-D-manno-heptose-1,7-bisphosphate. Functionally, catalyzes the ADP transfer from ATP to D-glycero-beta-D-manno-heptose 1-phosphate, yielding ADP-D-glycero-beta-D-manno-heptose. This Streptomyces coelicolor (strain ATCC BAA-471 / A3(2) / M145) protein is Bifunctional protein HldE.